The chain runs to 375 residues: tRNA-specific 2-thiouridylase MnmA (375 aa).

ATP contacts are provided by residues 12–19 and Met38; that span reads GMSGGVDS. The segment at 98-100 is interaction with target base in tRNA; it reads NPD. Catalysis depends on Cys103, which acts as the Nucleophile. A disulfide bond links Cys103 and Cys200. ATP is bound at residue Gly127. The interval 150 to 152 is interaction with tRNA; the sequence is KDQ. The Cysteine persulfide intermediate role is filled by Cys200. Residues 312–313 form an interaction with tRNA region; that stretch reads RY.

It belongs to the MnmA/TRMU family.

It is found in the cytoplasm. It catalyses the reaction S-sulfanyl-L-cysteinyl-[protein] + uridine(34) in tRNA + AH2 + ATP = 2-thiouridine(34) in tRNA + L-cysteinyl-[protein] + A + AMP + diphosphate + H(+). Catalyzes the 2-thiolation of uridine at the wobble position (U34) of tRNA, leading to the formation of s(2)U34. The sequence is that of tRNA-specific 2-thiouridylase MnmA from Lactobacillus delbrueckii subsp. bulgaricus (strain ATCC BAA-365 / Lb-18).